The sequence spans 349 residues: Dipeptide transport ATP-binding protein DppD (349 aa).

In terms of domain architecture, ABC transporter spans 7 to 258 (LEVKNLHVNF…PQHPYTWGLL (252 aa)). 43-50 (GESGSGKS) is an ATP binding site.

It belongs to the ABC transporter superfamily. As to quaternary structure, the complex is composed of two ATP-binding proteins (DppD and DppF), two transmembrane proteins (DppB and DppC) and a solute-binding protein (DppA).

The protein resides in the cell membrane. The catalysed reaction is a dipeptide(out) + ATP + H2O = a dipeptide(in) + ADP + phosphate + H(+). Its function is as follows. Part of the ABC transporter DppABCDF involved in dipeptide transport. Responsible for energy coupling to the transport system. The chain is Dipeptide transport ATP-binding protein DppD from Lactococcus lactis subsp. cremoris (strain MG1363).